A 514-amino-acid polypeptide reads, in one-letter code: Maltose/maltodextrin transport system permease protein MalF (514 aa).

The Cytoplasmic portion of the chain corresponds to 1-16; sequence MDVIKKKHWWQSDALK. Residues 17-36 traverse the membrane as a helical segment; that stretch reads WSVLGLLGLLVGYLVVLMYA. Over 37-39 the chain is Periplasmic; it reads QGE. The chain crosses the membrane as a helical span at residues 40 to 58; it reads YLFAITTLILSSAGLYIFA. At 59–66 the chain is on the cytoplasmic side; sequence NRKAYAWR. The helical transmembrane segment at 67–92 threads the bilayer; the sequence is YVYPGMAGMGLFVLFPLVCTIAIAFT. Over 93-275 the chain is Periplasmic; that stretch reads NYSSTNQLTF…RVFTDEGIQK (183 aa). Residues 276–306 traverse the membrane as a helical segment; the sequence is PFLAIFVWTVVFSLITVFLTVAVGMVLACLV. Residues 281–505 form the ABC transmembrane type-1 domain; the sequence is FVWTVVFSLI…LLVGALAIVN (225 aa). The Cytoplasmic segment spans residues 307 to 318; that stretch reads QWEALRGKAVYR. Residues 319–336 traverse the membrane as a helical segment; sequence VLLILPYAVPSFISILIF. The Periplasmic portion of the chain corresponds to 337–369; sequence KGLFNQSFGEINMMLSALFGVKPAWFSDPTTAR. A helical membrane pass occupies residues 370 to 392; it reads TMLIIVNTWLGYPYMMILCMGLL. Topologically, residues 393–425 are cytoplasmic; that stretch reads KAIPDDLYEASAMDGAGPFQNFFKITLPLLIKP. Residues 426-452 traverse the membrane as a helical segment; that stretch reads LTPLMIASFAFNFNNFVLIQLLTNGGP. At 453–483 the chain is on the periplasmic side; the sequence is DRLGTTTPAGYTDLLVNYTYRIAFEGGGGQD. The helical transmembrane segment at 484-505 threads the bilayer; it reads FGLAAAIATLIFLLVGALAIVN. Over 506 to 514 the chain is Cytoplasmic; it reads LKATRMKFD.

This sequence belongs to the binding-protein-dependent transport system permease family. MalFG subfamily. In terms of assembly, the complex is composed of two ATP-binding proteins (MalK), two transmembrane proteins (MalG and MalF) and a solute-binding protein (MalE). Protein stability and stable complex formation require YidC.

Its subcellular location is the cell inner membrane. Functionally, part of the ABC transporter complex MalEFGK involved in maltose/maltodextrin import. Probably responsible for the translocation of the substrate across the membrane. The chain is Maltose/maltodextrin transport system permease protein MalF from Escherichia coli (strain K12).